The sequence spans 67 residues: Beta-defensin 123 (67 aa).

An N-terminal signal peptide occupies residues 1 to 20 (MKLLLLTLTVLLLLSQLTPG). 3 disulfide bridges follow: Cys-25–Cys-52, Cys-32–Cys-46, and Cys-36–Cys-53.

This sequence belongs to the beta-defensin family.

The protein localises to the secreted. Has antibacterial activity. The sequence is that of Beta-defensin 123 (DEFB123) from Gorilla gorilla gorilla (Western lowland gorilla).